The following is a 642-amino-acid chain: Threonine--tRNA ligase (642 aa).

The TGS domain maps to 1–61; the sequence is MPVITLPDGS…ETDSTLSIIT (61 aa). The tract at residues 243-534 is catalytic; sequence DHRKIGKQLD…LTEEFAGFFP (292 aa). 3 residues coordinate Zn(2+): cysteine 334, histidine 385, and histidine 511.

This sequence belongs to the class-II aminoacyl-tRNA synthetase family. Homodimer. It depends on Zn(2+) as a cofactor.

Its subcellular location is the cytoplasm. It catalyses the reaction tRNA(Thr) + L-threonine + ATP = L-threonyl-tRNA(Thr) + AMP + diphosphate + H(+). Its function is as follows. Catalyzes the attachment of threonine to tRNA(Thr) in a two-step reaction: L-threonine is first activated by ATP to form Thr-AMP and then transferred to the acceptor end of tRNA(Thr). Also edits incorrectly charged L-seryl-tRNA(Thr). This Klebsiella pneumoniae (strain 342) protein is Threonine--tRNA ligase.